Consider the following 531-residue polypeptide: Serine protease gd (531 aa).

Residues 1 to 19 (MRLHLAAILILCIEHVTKA) form the signal peptide. The tract at residues 155-174 (PEEEEVRKTDDKPPSTPHIQ) is disordered. The Peptidase S1 domain maps to 246 to 531 (IESDSADSLP…FLDWITAFVI (286 aa)). N-linked (GlcNAc...) asparagine glycosylation occurs at N272. C280 and C296 form a disulfide bridge. Residues H295 and D350 each act as charge relay system in the active site. Residues N397 and N445 are each glycosylated (N-linked (GlcNAc...) asparagine). Residues C432 and C449 are joined by a disulfide bond. Residue S471 is the Charge relay system of the active site.

This sequence belongs to the peptidase S1 family. Post-translationally, proteolytically activated by the protease ndl. As to expression, expression begins in previtellogenic stages and is seen in germline-derived nurse cells of the germarium. Expression continues throughout oogenesis with transcripts from the nurse cells accumulating in the oocytes. Most abundant in the ovaries, the level of protein decreases from the moment of egg laying and is essentially gone by 4 hours.

Its subcellular location is the secreted. In terms of biological role, component of the extracellular signaling pathway that establishes the dorsal-ventral pathway of the embryo. A protease cascade involving ndl, gd, snk and ea results in activation of the spz Toll receptor ligand; acts downstream of ndl but upstream of snk and ea. Activation of ea requires activation of the ndl-gd-snk protease cascade and sulfation of a vitelline membrane component by pip. Localized activation of the Toll receptor in the ventral region of the embryo defines cell identities along the dorsal-ventral continuum. This Drosophila melanogaster (Fruit fly) protein is Serine protease gd.